The following is a 332-amino-acid chain: Ribosomal RNA small subunit methyltransferase H (332 aa).

S-adenosyl-L-methionine is bound by residues 36–38 (GGY), D54, F81, D102, and Q109. A disordered region spans residues 297–318 (ARSAKLRGAERTEAPAHAAGDL).

The protein belongs to the methyltransferase superfamily. RsmH family.

The protein localises to the cytoplasm. It catalyses the reaction cytidine(1402) in 16S rRNA + S-adenosyl-L-methionine = N(4)-methylcytidine(1402) in 16S rRNA + S-adenosyl-L-homocysteine + H(+). Its function is as follows. Specifically methylates the N4 position of cytidine in position 1402 (C1402) of 16S rRNA. The sequence is that of Ribosomal RNA small subunit methyltransferase H from Rhodopseudomonas palustris (strain TIE-1).